Consider the following 269-residue polypeptide: Phosphate import ATP-binding protein PstB (269 aa).

The ABC transporter domain occupies 21–264 (IEIKDFNFFY…PKDRRTENYI (244 aa)). Residue 55–62 (GPSGCGKT) participates in ATP binding.

Belongs to the ABC transporter superfamily. Phosphate importer (TC 3.A.1.7) family. As to quaternary structure, the complex is composed of two ATP-binding proteins (PstB), two transmembrane proteins (PstC and PstA) and a solute-binding protein (PstS).

The protein resides in the cell membrane. It carries out the reaction phosphate(out) + ATP + H2O = ADP + 2 phosphate(in) + H(+). Part of the ABC transporter complex PstSACB involved in phosphate import. Responsible for energy coupling to the transport system. The protein is Phosphate import ATP-binding protein PstB of Mycoplasma capricolum subsp. capricolum (strain California kid / ATCC 27343 / NCTC 10154).